A 200-amino-acid chain; its full sequence is Probable molybdenum cofactor guanylyltransferase (200 aa).

GTP is bound by residues 8 to 10, Lys-20, Asp-66, and Asp-97; that span reads LAG. Residue Asp-97 participates in Mg(2+) binding.

This sequence belongs to the MobA family. Requires Mg(2+) as cofactor.

The protein resides in the cytoplasm. The enzyme catalyses Mo-molybdopterin + GTP + H(+) = Mo-molybdopterin guanine dinucleotide + diphosphate. Its function is as follows. Transfers a GMP moiety from GTP to Mo-molybdopterin (Mo-MPT) cofactor (Moco or molybdenum cofactor) to form Mo-molybdopterin guanine dinucleotide (Mo-MGD) cofactor. The sequence is that of Probable molybdenum cofactor guanylyltransferase from Bacillus velezensis (strain DSM 23117 / BGSC 10A6 / LMG 26770 / FZB42) (Bacillus amyloliquefaciens subsp. plantarum).